Reading from the N-terminus, the 240-residue chain is MFPLLFVAGLVVLNLVSSARSQKTEPLSGTGDQSLFRGADQHDFAIVIPPGGTECFWQFAHQTGYFYFSYEVQRTIGMSHDRHVAATAHTPQGFLIETSKNVRGQINFSTHETGFYQLCLANQQNRFASVQVYLNFGVFYEGPEMDHKENERKQLNDTLDAIEESTRKVHYNIFHMWRHYNFARMRKTADFFLLQSNYNYVNWWSTAQSLVIVLSGILQLYFLKRLFNTPMTTETQKPRC.

Residues 1–21 (MFPLLFVAGLVVLNLVSSARS) form the signal peptide. Over 22–200 (QKTEPLSGTG…FFLLQSNYNY (179 aa)) the chain is Lumenal. The 86-residue stretch at 53 to 138 (TECFWQFAHQ…SVQVYLNFGV (86 aa)) folds into the GOLD domain. N-linked (GlcNAc...) asparagine glycans are attached at residues Asn107 and Asn156. Residues 201 to 223 (VNWWSTAQSLVIVLSGILQLYFL) form a helical membrane-spanning segment. The Cytoplasmic portion of the chain corresponds to 224 to 240 (KRLFNTPMTTETQKPRC).

It belongs to the EMP24/GP25L family.

The protein localises to the endoplasmic reticulum membrane. This Bos taurus (Bovine) protein is Transmembrane emp24 domain-containing protein 6 (TMED6).